The chain runs to 688 residues: Glycine--tRNA ligase beta subunit (688 aa).

Belongs to the class-II aminoacyl-tRNA synthetase family. Tetramer of two alpha and two beta subunits.

The protein localises to the cytoplasm. It carries out the reaction tRNA(Gly) + glycine + ATP = glycyl-tRNA(Gly) + AMP + diphosphate. In Chromohalobacter salexigens (strain ATCC BAA-138 / DSM 3043 / CIP 106854 / NCIMB 13768 / 1H11), this protein is Glycine--tRNA ligase beta subunit.